The following is a 348-amino-acid chain: Uroporphyrinogen decarboxylase (348 aa).

Substrate is bound by residues 27-31, Phe-46, Asp-76, Tyr-152, Ser-207, and His-320; that span reads RQAGR.

Belongs to the uroporphyrinogen decarboxylase family. Homodimer.

The protein localises to the cytoplasm. It catalyses the reaction uroporphyrinogen III + 4 H(+) = coproporphyrinogen III + 4 CO2. It functions in the pathway porphyrin-containing compound metabolism; protoporphyrin-IX biosynthesis; coproporphyrinogen-III from 5-aminolevulinate: step 4/4. Functionally, catalyzes the decarboxylation of four acetate groups of uroporphyrinogen-III to yield coproporphyrinogen-III. The sequence is that of Uroporphyrinogen decarboxylase from Bacillus cytotoxicus (strain DSM 22905 / CIP 110041 / 391-98 / NVH 391-98).